Here is a 305-residue protein sequence, read N- to C-terminus: Glycine--tRNA ligase alpha subunit (305 aa).

Belongs to the class-II aminoacyl-tRNA synthetase family. As to quaternary structure, tetramer of two alpha and two beta subunits.

It localises to the cytoplasm. It carries out the reaction tRNA(Gly) + glycine + ATP = glycyl-tRNA(Gly) + AMP + diphosphate. The chain is Glycine--tRNA ligase alpha subunit from Streptococcus pneumoniae serotype 19F (strain G54).